The following is a 503-amino-acid chain: E3 ubiquitin-protein ligase ariadne-1 (503 aa).

Residues 1 to 11 (MDSDNDNDFCD) show a composition bias toward acidic residues. Residues 1-40 (MDSDNDNDFCDNVDSGNVSSGDDGDDDFGMEVDLPSSADR) are disordered. A compositionally biased stretch (low complexity) spans 12–21 (NVDSGNVSSG). The tract at residues 129–340 (QCEECEICFS…SSWYNCNRYD (212 aa)) is TRIAD supradomain. Zn(2+)-binding residues include Cys-133, Cys-136, Cys-150, His-152, Cys-155, Cys-158, Cys-178, Cys-183, Cys-223, Cys-228, Cys-244, Cys-246, Cys-251, Cys-254, His-259, Cys-264, Cys-291, and Cys-294. The RING-type 1 zinc finger occupies 133–183 (CEICFSQLPPDSMAGLECGHRFCMPCWHEYLSTKIVAEGLGQTISCAAHGC). Residues 133 to 201 (CEICFSQLPP…VANLVTDARV (69 aa)) are important for interaction with Ubc10. The IBR-type zinc-finger motif lies at 203–264 (VKYQQLITNS…GENWHDPVKC (62 aa)). The segment at 291-322 (CPRCSVTIEKDGGCNHMVCKNQNCKNEFCWVC) adopts an RING-type 2; atypical zinc-finger fold. Cys-304 is an active-site residue. Zn(2+) contacts are provided by Cys-309, Cys-314, Cys-319, Cys-322, His-329, and Cys-336. Residues 341-361 (EDEAKTARDAQEKLRSSLARY) adopt a coiled-coil conformation.

This sequence belongs to the RBR family. Ariadne subfamily. In terms of assembly, can form homodimers. Interacts (via RING-type 1 zinc finger) with Ubc10. Interacts with the LINC complex member koi. Interacts with park. Interacts with ari-2. Specifically interacts with isoform ECR-A of EcR. Post-translationally, autophosphorylated. Widely expressed, with prominent levels in the nervous system and female gonads.

Its subcellular location is the cytoplasm. The protein localises to the nucleus. The enzyme catalyses [E2 ubiquitin-conjugating enzyme]-S-ubiquitinyl-L-cysteine + [acceptor protein]-L-lysine = [E2 ubiquitin-conjugating enzyme]-L-cysteine + [acceptor protein]-N(6)-ubiquitinyl-L-lysine.. Functionally, atypical E3 ubiquitin-protein ligase, which catalyzes ubiquitination of target proteins together with ubiquitin-conjugating enzyme E2 Ubc10. Controls the subcellular localization and morphology of muscle nuclei (myonuclei) by regulating the protein levels and distribution of the LINC (LInker of Nucleoskeleton and Cytoskeleton) complex. Functions by mediating the monoubiquitination of the LINC complex subunit koi leading to its subsequent proteasomal degradation. Appears to function, at least partially redundantly, with the RBR E3 ligase family member park in nuclear localization and morphology. Likely to function in metamorphosis by regulating the proteins levels of EcR isoform A (ECR-A) and its heterodimeric partner usp, via the ubiquitination and subsequent degradation of ECR-A. In Drosophila melanogaster (Fruit fly), this protein is E3 ubiquitin-protein ligase ariadne-1.